The primary structure comprises 283 residues: 1D-myo-inositol 2-acetamido-2-deoxy-alpha-D-glucopyranoside deacetylase (283 aa).

Zn(2+)-binding residues include H7, D10, and H148.

Belongs to the MshB deacetylase family. Zn(2+) serves as cofactor.

It carries out the reaction 1D-myo-inositol 2-acetamido-2-deoxy-alpha-D-glucopyranoside + H2O = 1D-myo-inositol 2-amino-2-deoxy-alpha-D-glucopyranoside + acetate. Its function is as follows. Catalyzes the deacetylation of 1D-myo-inositol 2-acetamido-2-deoxy-alpha-D-glucopyranoside (GlcNAc-Ins) in the mycothiol biosynthesis pathway. This chain is 1D-myo-inositol 2-acetamido-2-deoxy-alpha-D-glucopyranoside deacetylase, found in Gordonia bronchialis (strain ATCC 25592 / DSM 43247 / BCRC 13721 / JCM 3198 / KCTC 3076 / NBRC 16047 / NCTC 10667) (Rhodococcus bronchialis).